The chain runs to 537 residues: Eukaryotic translation initiation factor 3 subunit L (537 aa).

Residues 1-19 (MSRRVEFDMSHEDHTDRRR) show a composition bias toward basic and acidic residues. Positions 1–28 (MSRRVEFDMSHEDHTDRRRTNTFSSEED) are disordered. Residues 297 to 485 (EATKMFVNCL…GPSTVDDDEP (189 aa)) form the PCI domain.

This sequence belongs to the eIF-3 subunit L family. As to quaternary structure, component of the eukaryotic translation initiation factor 3 (eIF-3) complex.

The protein localises to the cytoplasm. In terms of biological role, component of the eukaryotic translation initiation factor 3 (eIF-3) complex, which is involved in protein synthesis of a specialized repertoire of mRNAs and, together with other initiation factors, stimulates binding of mRNA and methionyl-tRNAi to the 40S ribosome. The eIF-3 complex specifically targets and initiates translation of a subset of mRNAs involved in cell proliferation. This chain is Eukaryotic translation initiation factor 3 subunit L, found in Caenorhabditis briggsae.